A 149-amino-acid chain; its full sequence is Transcriptional repressor NrdR (149 aa).

A zinc finger lies at 3–34; it reads CPFCSAVDTKVIDSRLVAEGHQVRRRRECLLC. The ATP-cone domain maps to 49–139; sequence PRVIKSNGSR…VYRSFEDIRE (91 aa).

The protein belongs to the NrdR family. Requires Zn(2+) as cofactor.

Functionally, negatively regulates transcription of bacterial ribonucleotide reductase nrd genes and operons by binding to NrdR-boxes. The chain is Transcriptional repressor NrdR from Aeromonas hydrophila subsp. hydrophila (strain ATCC 7966 / DSM 30187 / BCRC 13018 / CCUG 14551 / JCM 1027 / KCTC 2358 / NCIMB 9240 / NCTC 8049).